The sequence spans 574 residues: Meiotically up-regulated gene 72 protein (574 aa).

The segment at 339 to 374 (VRAGTPQSSPNFNPAMRRSPVGAASRSPSRSTIGIS) is disordered. T343 carries the post-translational modification Phosphothreonine. Over residues 364 to 374 (RSPSRSTIGIS) the composition is skewed to polar residues. Position 392 is a phosphoserine (S392). Disordered stretches follow at residues 422–451 (TSPS…NKAG) and 495–574 (RNRR…RRMD). Positions 541–554 (LYDTSRYPTRNSKP) are enriched in polar residues.

It localises to the cytoplasm. In terms of biological role, has a role in meiosis. The chain is Meiotically up-regulated gene 72 protein (mug72) from Schizosaccharomyces pombe (strain 972 / ATCC 24843) (Fission yeast).